An 876-amino-acid chain; its full sequence is Valine--tRNA ligase (876 aa).

The 'HIGH' region signature appears at 43–53 (PNVTGVLHMGH). The short motif at 533–537 (KMSKS) is the 'KMSKS' region element. Lysine 536 provides a ligand contact to ATP. Residues 804-876 (GALIDVEEEI…DSLNQLQSTK (73 aa)) are a coiled coil.

The protein belongs to the class-I aminoacyl-tRNA synthetase family. ValS type 1 subfamily. In terms of assembly, monomer.

The protein resides in the cytoplasm. It catalyses the reaction tRNA(Val) + L-valine + ATP = L-valyl-tRNA(Val) + AMP + diphosphate. In terms of biological role, catalyzes the attachment of valine to tRNA(Val). As ValRS can inadvertently accommodate and process structurally similar amino acids such as threonine, to avoid such errors, it has a 'posttransfer' editing activity that hydrolyzes mischarged Thr-tRNA(Val) in a tRNA-dependent manner. The protein is Valine--tRNA ligase of Porphyromonas gingivalis (strain ATCC 33277 / DSM 20709 / CIP 103683 / JCM 12257 / NCTC 11834 / 2561).